The following is a 583-amino-acid chain: Thiol:disulfide interchange protein DsbD (583 aa).

The N-terminal stretch at 1–20 (MLKRFIFLLVGITLTLSAHA) is a signal peptide. Intrachain disulfides connect Cys-123/Cys-128 and Cys-200/Cys-322. A run of 8 helical transmembrane segments spans residues 185–205 (IFWF…LPML), 237–257 (LTYT…QVAL), 261–281 (PVLI…FGLF), 302–322 (GGAF…ASPC), 344–364 (GLAL…ITLF), 375–395 (WLLK…VFLL), 405–425 (PLMW…VIPT), and 433–453 (VRIV…NLVW). A Thioredoxin domain is found at 440–583 (TFAVASYPWA…NQFLNWLNQL (144 aa)). Cys-500 and Cys-503 are disulfide-bonded.

This sequence belongs to the thioredoxin family. DsbD subfamily.

The protein localises to the cell inner membrane. It carries out the reaction [protein]-dithiol + NAD(+) = [protein]-disulfide + NADH + H(+). The enzyme catalyses [protein]-dithiol + NADP(+) = [protein]-disulfide + NADPH + H(+). Functionally, required to facilitate the formation of correct disulfide bonds in some periplasmic proteins and for the assembly of the periplasmic c-type cytochromes. Acts by transferring electrons from cytoplasmic thioredoxin to the periplasm. This transfer involves a cascade of disulfide bond formation and reduction steps. This chain is Thiol:disulfide interchange protein DsbD, found in Actinobacillus pleuropneumoniae serotype 5b (strain L20).